Here is a 602-residue protein sequence, read N- to C-terminus: Sodium- and chloride-dependent GABA transporter 2 (602 aa).

Topologically, residues 1 to 40 (MENRASGTTSNGETKPVCPAMEKVEEDGTLEREHWNNKME) are cytoplasmic. 3 helical membrane passes run 41 to 61 (FVLSVAGEIIGLGNVWRFPYL), 68 to 88 (GAFFIPYLIFLFTCGIPVFFL), and 121 to 141 (IVSLLNVYYIVVLAWALFYLF). Over 142–206 (SSFTTDLPWG…GIQHLGSLRW (65 aa)) the chain is Extracellular. Cysteines 153 and 162 form a disulfide. Asn169, Asn173, and Asn178 each carry an N-linked (GlcNAc...) asparagine glycan. 2 consecutive transmembrane segments (helical) span residues 207–227 (ELVLCLLLAWIICYFCIWKGV) and 233–253 (VVYFTATFPYLMLVVLLIRGV). N-linked (GlcNAc...) asparagine glycosylation occurs at Asn269. Helical transmembrane passes span 282 to 302 (AGTQIFFSFAICLGCLTALGS), 319 to 339 (ILNSSTSFMAGFAIFSILGFM), 366 to 386 (VVMLPFSPLWACCFFFMVVLL), 418 to 438 (VLILIVSVISFFIGLIMLTEG), 453 to 473 (GMCLLFVAIFESLCVAWVYGA), 490 to 510 (PLIKYCWLFFTPAVCLATFLF), and 528 to 548 (WWGDALGWLLALSSMICIPAW). Over 549–602 (SIYKLRTLKGPLRERLRQLVCPAEDLPQKNQPEPTAPATPMTSLLRLTELESNC) the chain is Cytoplasmic. Thr587 carries the post-translational modification Phosphothreonine. Ser591 is subject to Phosphoserine.

Belongs to the sodium:neurotransmitter symporter (SNF) (TC 2.A.22) family. SLC6A13 subfamily. Expressed at high levels in liver, followed by kidney and leptomeninges, and very low levels in the cerebellum (at protein level). In the brain, detected in some blood vessels (at protein level). In the kidney, expressed in the cortex, including parts of the proximal tubules, but not in the medulla (at protein level). In the liver, highest expression in periportal hepatocytes, with highest density at the vascular side (at protein level). Also detected at low levels in other organs, including skeletal muscle.

The protein localises to the cell membrane. The protein resides in the basolateral cell membrane. It catalyses the reaction 4-aminobutanoate(out) + chloride(out) + 2 Na(+)(out) = 4-aminobutanoate(in) + chloride(in) + 2 Na(+)(in). The catalysed reaction is taurine(out) + chloride(out) + 2 Na(+)(out) = taurine(in) + chloride(in) + 2 Na(+)(in). It carries out the reaction beta-alanine(out) + chloride(out) + 2 Na(+)(out) = beta-alanine(in) + chloride(in) + 2 Na(+)(in). The enzyme catalyses hypotaurine(out) + chloride(out) + 2 Na(+)(out) = hypotaurine(in) + chloride(in) + 2 Na(+)(in). With respect to regulation, gamma-aminobutyric acid (GABA) transport is inhibited by beta-alanine, taurine, hypotaurine, beta-guanidinopropionic acid, 2,3-diaminopropionic acid, guvacine and nipecotic acid. Beta-alanine transport is inhibited by GABA. Taurine transport is inhibited by GABA, beta-alanine, SNAP-5114, nigericin, nipecotic acid and ouabain. Its function is as follows. Mediates sodium- and chloride-dependent transport of gamma-aminobutyric acid (GABA). Can also mediate transport of beta-alanine, taurine and hypotaurine and is the major taurine transporter in hepatocytes. This Mus musculus (Mouse) protein is Sodium- and chloride-dependent GABA transporter 2 (Slc6a13).